The sequence spans 151 residues: Large ribosomal subunit protein uL15 (151 aa).

A disordered region spans residues 1–57; that stretch reads MTLRLDSLKANKGARRRKLRKGRGIAAGQGASCGFGMRGQKSRSGRPTRPGFEGGQM. Basic residues predominate over residues 12–23; that stretch reads KGARRRKLRKGR. The span at 25–37 shows a compositional bias: gly residues; it reads IAAGQGASCGFGM.

This sequence belongs to the universal ribosomal protein uL15 family. Part of the 50S ribosomal subunit.

Binds to the 23S rRNA. In Synechococcus sp. (strain CC9902), this protein is Large ribosomal subunit protein uL15.